The chain runs to 152 residues: Ribosome maturation factor RimP (152 aa).

Belongs to the RimP family.

Its subcellular location is the cytoplasm. In terms of biological role, required for maturation of 30S ribosomal subunits. In Burkholderia lata (strain ATCC 17760 / DSM 23089 / LMG 22485 / NCIMB 9086 / R18194 / 383), this protein is Ribosome maturation factor RimP.